The primary structure comprises 720 residues: Inactive serine protease PAMR1 (720 aa).

A signal peptide spans 1–21 (MELGCWTQLGLTFLQLLLISS). 9 disulfide bridges follow: Cys128-Cys150, Cys177-Cys199, Cys239-Cys250, Cys244-Cys260, Cys262-Cys271, Cys280-Cys329, Cys315-Cys342, Cys414-Cys442, and Cys489-Cys505. One can recognise a CUB domain in the interval 128-236 (CGQVLRAPKG…DGFHAIYEEI (109 aa)). Residues 235–272 (EITACSSSPCFHDGTCVLDKAGSYKCACLAGYTGQRCE) form the EGF-like domain. Sushi domains are found at residues 278–344 (RNCS…ICIK) and 387–444 (APTK…SCIP). Positions 445–720 (ICGKIENITA…FKDWIERNMK (276 aa)) constitute a Peptidase S1 domain. The N-linked (GlcNAc...) asparagine glycan is linked to Asn614. Disulfide bonds link Cys630–Cys649 and Cys661–Cys697.

Belongs to the peptidase S1 family.

It localises to the secreted. In terms of biological role, may play a role in regeneration of skeletal muscle. The chain is Inactive serine protease PAMR1 (PAMR1) from Homo sapiens (Human).